A 132-amino-acid chain; its full sequence is D-ribose pyranase (132 aa).

H20 serves as the catalytic Proton donor. Substrate-binding positions include D28, H98, and 121–123; that span reads YSN.

Belongs to the RbsD / FucU family. RbsD subfamily. In terms of assembly, homodecamer.

Its subcellular location is the cytoplasm. It carries out the reaction beta-D-ribopyranose = beta-D-ribofuranose. Its pathway is carbohydrate metabolism; D-ribose degradation; D-ribose 5-phosphate from beta-D-ribopyranose: step 1/2. In terms of biological role, catalyzes the interconversion of beta-pyran and beta-furan forms of D-ribose. This chain is D-ribose pyranase, found in Kosmotoga olearia (strain ATCC BAA-1733 / DSM 21960 / TBF 19.5.1).